A 132-amino-acid polypeptide reads, in one-letter code: Large ribosomal subunit protein bL12 (132 aa).

It belongs to the bacterial ribosomal protein bL12 family. Homodimer. Part of the ribosomal stalk of the 50S ribosomal subunit. Forms a multimeric L10(L12)X complex, where L10 forms an elongated spine to which 2 to 4 L12 dimers bind in a sequential fashion. Binds GTP-bound translation factors.

Forms part of the ribosomal stalk which helps the ribosome interact with GTP-bound translation factors. Is thus essential for accurate translation. This chain is Large ribosomal subunit protein bL12, found in Chloroflexus aggregans (strain MD-66 / DSM 9485).